A 393-amino-acid chain; its full sequence is Phospho-N-acetylmuramoyl-pentapeptide-transferase (393 aa).

A run of 10 helical transmembrane segments spans residues 29-49 (RAVMSAMTALLLGLVFGPWVI), 75-95 (TPTMGGVLILLSIAVSTLLWF), 101-121 (FVWVVMLVTFGFGAIGWVDDW), 138-158 (YLWQSLIGLVAAIYLAFSVSE), 194-214 (VSYPLGVFGFIFLTYFVIVGA), 226-246 (GLAIMPVVLVGSALGLFAYVT), 263-283 (AGELLIFCAAMAGAGLAFLWF), 290-310 (VFMGDVGALALGGALGTIAVI), 315-335 (IVLGIMGGIFVVEALSVMAQV), and 370-390 (QVVVRFWIITMLLCLVGLSTL).

This sequence belongs to the glycosyltransferase 4 family. MraY subfamily. It depends on Mg(2+) as a cofactor.

Its subcellular location is the cell inner membrane. It carries out the reaction UDP-N-acetyl-alpha-D-muramoyl-L-alanyl-gamma-D-glutamyl-meso-2,6-diaminopimeloyl-D-alanyl-D-alanine + di-trans,octa-cis-undecaprenyl phosphate = di-trans,octa-cis-undecaprenyl diphospho-N-acetyl-alpha-D-muramoyl-L-alanyl-D-glutamyl-meso-2,6-diaminopimeloyl-D-alanyl-D-alanine + UMP. Its pathway is cell wall biogenesis; peptidoglycan biosynthesis. Its function is as follows. Catalyzes the initial step of the lipid cycle reactions in the biosynthesis of the cell wall peptidoglycan: transfers peptidoglycan precursor phospho-MurNAc-pentapeptide from UDP-MurNAc-pentapeptide onto the lipid carrier undecaprenyl phosphate, yielding undecaprenyl-pyrophosphoryl-MurNAc-pentapeptide, known as lipid I. This is Phospho-N-acetylmuramoyl-pentapeptide-transferase from Leptothrix cholodnii (strain ATCC 51168 / LMG 8142 / SP-6) (Leptothrix discophora (strain SP-6)).